We begin with the raw amino-acid sequence, 342 residues long: Nucleoid-associated protein SO_2177 (342 aa).

Belongs to the YejK family.

The protein resides in the cytoplasm. The protein localises to the nucleoid. The protein is Nucleoid-associated protein SO_2177 of Shewanella oneidensis (strain ATCC 700550 / JCM 31522 / CIP 106686 / LMG 19005 / NCIMB 14063 / MR-1).